The sequence spans 1164 residues: Shugoshin 2A (1164 aa).

Positions leucine 62 to asparagine 113 form a coiled coil. 5 disordered regions span residues serine 160–arginine 269, histidine 287–arginine 314, arginine 390–arginine 492, threonine 521–threonine 541, and proline 917–glycine 992. Residues serine 182–serine 198 show a composition bias toward low complexity. Polar residues-rich tracts occupy residues aspartate 238–glutamate 247 and glutamine 288–asparagine 299. The span at arginine 390 to serine 412 shows a compositional bias: basic and acidic residues. Residues cysteine 443 to asparagine 472 show a composition bias toward polar residues. The span at arginine 525 to threonine 541 shows a compositional bias: basic and acidic residues. Residues glycine 934–glycine 948 show a composition bias toward polar residues. Serine 1042 bears the Phosphoserine mark. The interval isoleucine 1092 to arginine 1164 is disordered. The segment covering threonine 1112–threonine 1125 has biased composition (low complexity). Over residues asparagine 1126 to histidine 1140 the composition is skewed to polar residues.

Belongs to the shugoshin family. As to quaternary structure, part of an astrin (SPAG5)-kinastrin (SKAP) complex containing KNSTRN, SPAG5, PLK1, DYNLL1 and SGO2A. Interacts with CDCA8. Interacts with PPP2CA. Ubiquitously expressed in proliferating cells. Highly expressed in the testis and oocytes.

Its subcellular location is the nucleus. It localises to the chromosome. The protein resides in the centromere. The protein localises to the kinetochore. Functionally, cooperates with PPP2CA to protect centromeric cohesin from separase-mediated cleavage in oocytes specifically during meiosis I. Has a crucial role in protecting REC8 at centromeres from cleavage by separase. During meiosis, protects centromeric cohesion complexes until metaphase II/anaphase II transition, preventing premature release of meiosis-specific REC8 cohesin complexes from anaphase I centromeres. Is thus essential for an accurate gametogenesis. May act by targeting PPP2CA to centromeres, thus leading to cohesin dephosphorylation. Essential for recruiting KIF2C to the inner centromere and for correcting defective kinetochore attachments. Involved in centromeric enrichment of AUKRB in prometaphase. In Mus musculus (Mouse), this protein is Shugoshin 2A.